The following is a 339-amino-acid chain: MKIVFWGTPEFSVPILEALINSDHDVVGVVTQPDRRRSRGNKLIHSPVKTVALENNIPVLTPQNIRQESLIQQKIINLKADLNLVVAFGQILPLLILDSPPLGSWNIHASLLPRWRGAAPIQRAILEGDILTGICIMLMEEGLDTGPILLQKEFPIDVLRNSYQISSDLSSLSATTIIEALELIRTSSHFTKNLVEIYPKLIKQDVVNCDPIYAKRLTKKEFQIDWKRLSEEIHRTIMGLYPAAYTSLNGKRIKLHNSIPLTPSFSTYISNNYDSYIIDYISTSSYPGEILAVIPKLGFIVGTASYPILILNGQMEGRNSVSADILAKQIDLSIGIRFD.

Residue 110-113 (SLLP) coordinates (6S)-5,6,7,8-tetrahydrofolate.

Belongs to the Fmt family.

The enzyme catalyses L-methionyl-tRNA(fMet) + (6R)-10-formyltetrahydrofolate = N-formyl-L-methionyl-tRNA(fMet) + (6S)-5,6,7,8-tetrahydrofolate + H(+). In terms of biological role, attaches a formyl group to the free amino group of methionyl-tRNA(fMet). The formyl group appears to play a dual role in the initiator identity of N-formylmethionyl-tRNA by promoting its recognition by IF2 and preventing the misappropriation of this tRNA by the elongation apparatus. The protein is Methionyl-tRNA formyltransferase of Prochlorococcus marinus (strain MIT 9211).